Consider the following 435-residue polypeptide: Glucan 1,3-beta-glucosidase (435 aa).

The N-terminal stretch at 1–30 (MLFPVLHLPKAMKFSSFSLIASSLLSLVAA) is a signal peptide. Glutamate 222 serves as the catalytic Proton donor. Cystine bridges form between cysteine 306–cysteine 432 and cysteine 331–cysteine 357. Glutamate 323 (nucleophile) is an active-site residue.

Belongs to the glycosyl hydrolase 5 (cellulase A) family.

The protein localises to the secreted. It carries out the reaction Successive hydrolysis of beta-D-glucose units from the non-reducing ends of (1-&gt;3)-beta-D-glucans, releasing alpha-glucose.. In terms of biological role, beta-glucanases participate in the metabolism of beta-glucan, the main structural component of the cell wall. It could also function biosynthetically as a transglycosylase. The protein is Glucan 1,3-beta-glucosidase of Pichia angusta (Yeast).